The chain runs to 78 residues: Large ribosomal subunit protein uL24 (78 aa).

The protein belongs to the universal ribosomal protein uL24 family. Part of the 50S ribosomal subunit.

Its function is as follows. One of two assembly initiator proteins, it binds directly to the 5'-end of the 23S rRNA, where it nucleates assembly of the 50S subunit. In terms of biological role, one of the proteins that surrounds the polypeptide exit tunnel on the outside of the subunit. This Campylobacter curvus (strain 525.92) protein is Large ribosomal subunit protein uL24.